Reading from the N-terminus, the 209-residue chain is Glutathione S-transferase 1-1 (209 aa).

In terms of domain architecture, GST N-terminal spans 1 to 81 (MADFYYLPGS…YLVEKYGKTD (81 aa)). Glutathione is bound by residues Ser-10, 51–53 (HTI), and 65–67 (ESR). In terms of domain architecture, GST C-terminal spans 87–209 (CPKKRAVINQ…GCLEFKKFFE (123 aa)).

The protein belongs to the GST superfamily. Theta family. Homodimer.

It carries out the reaction RX + glutathione = an S-substituted glutathione + a halide anion + H(+). The catalysed reaction is 1,1,1-trichloro-2,2-bis(4-chlorophenyl)ethane = 1,1-dichloro-2,2-bis(4-chlorophenyl)ethylene + chloride + H(+). Its function is as follows. Conjugation of reduced glutathione to a wide number of exogenous and endogenous hydrophobic electrophiles. Has DDT dehydrochlorinase activity. The chain is Glutathione S-transferase 1-1 (GstD1) from Drosophila sechellia (Fruit fly).